The sequence spans 219 residues: Chalcone--flavanone isomerase (219 aa).

Substrate contacts are provided by Thr-50, Asn-115, and Ser-188.

The protein belongs to the chalcone isomerase family.

The catalysed reaction is a chalcone = a flavanone.. It functions in the pathway secondary metabolite biosynthesis; flavonoid biosynthesis. Catalyzes the intramolecular cyclization of bicyclic chalcones into tricyclic (S)-flavanones. Responsible for the isomerization of 4,2',4',6'-tetrahydroxychalcone (also termed chalcone) into naringenin. This is Chalcone--flavanone isomerase (CHI) from Clitoria ternatea (Butterfly pea).